Here is a 33-residue protein sequence, read N- to C-terminus: Neutrophil defensin 1 (33 aa).

Cystine bridges form between Cys3/Cys31, Cys5/Cys20, and Cys10/Cys30.

The protein belongs to the alpha-defensin family.

The protein localises to the secreted. Its function is as follows. Anti-fungal and bactericidal activity, greater against Gram-positive bacteria. The sequence is that of Neutrophil defensin 1 from Mesocricetus auratus (Golden hamster).